We begin with the raw amino-acid sequence, 134 residues long: MKILSVFLFVFSIYIFGHVSGTGIRIVNELKSHKNLWMRCYSKNDVIGPKIIPVGYDYVNSFRANIWGTTRFMCTLKQRPNYRHYQNFTAFKQYTAYDNGADWDWRAREDGIYLKKEGGLKKSVDMNKVYDWIN.

The signal sequence occupies residues 1-21; the sequence is MKILSVFLFVFSIYIFGHVSG. Asn-87 carries N-linked (GlcNAc...) asparagine glycosylation.

It belongs to the plant self-incompatibility (S1) protein family.

Its subcellular location is the secreted. This chain is S-protein homolog 31, found in Arabidopsis thaliana (Mouse-ear cress).